The sequence spans 315 residues: Methionyl-tRNA formyltransferase (315 aa).

(6S)-5,6,7,8-tetrahydrofolate is bound at residue 113-116; the sequence is SLLP.

Belongs to the Fmt family.

It catalyses the reaction L-methionyl-tRNA(fMet) + (6R)-10-formyltetrahydrofolate = N-formyl-L-methionyl-tRNA(fMet) + (6S)-5,6,7,8-tetrahydrofolate + H(+). Functionally, attaches a formyl group to the free amino group of methionyl-tRNA(fMet). The formyl group appears to play a dual role in the initiator identity of N-formylmethionyl-tRNA by promoting its recognition by IF2 and preventing the misappropriation of this tRNA by the elongation apparatus. The polypeptide is Methionyl-tRNA formyltransferase (Erwinia tasmaniensis (strain DSM 17950 / CFBP 7177 / CIP 109463 / NCPPB 4357 / Et1/99)).